The following is a 432-amino-acid chain: Enolase (432 aa).

Gln-166 is a (2R)-2-phosphoglycerate binding site. Glu-208 serves as the catalytic Proton donor. Mg(2+)-binding residues include Asp-245, Glu-291, and Asp-318. Lys-343, Arg-372, Ser-373, and Lys-394 together coordinate (2R)-2-phosphoglycerate. The Proton acceptor role is filled by Lys-343.

Belongs to the enolase family. Requires Mg(2+) as cofactor.

Its subcellular location is the cytoplasm. The protein resides in the secreted. The protein localises to the cell surface. It carries out the reaction (2R)-2-phosphoglycerate = phosphoenolpyruvate + H2O. It functions in the pathway carbohydrate degradation; glycolysis; pyruvate from D-glyceraldehyde 3-phosphate: step 4/5. In terms of biological role, catalyzes the reversible conversion of 2-phosphoglycerate (2-PG) into phosphoenolpyruvate (PEP). It is essential for the degradation of carbohydrates via glycolysis. The protein is Enolase of Leptospira interrogans serogroup Icterohaemorrhagiae serovar copenhageni (strain Fiocruz L1-130).